The chain runs to 210 residues: Homeobox protein Rhox5 (210 aa).

The disordered stretch occupies residues 1-119; that stretch reads MEAEGSSRKV…GNPGGRQMPL (119 aa). Residues 17-30 show a composition bias toward basic and acidic residues; sequence GVKEDSEEQHDVKA. Over residues 47–79 the composition is skewed to gly residues; the sequence is GQPGVGAVGTEGEGEELNGGKGHFGPGAPGPMG. The homeobox; atypical DNA-binding region spans 117-175; the sequence is MPLQGSRFAQHRLRELESILQRTNSFDVPREDLDRLMDACVSRVQNWFKIRRAAARRTR.

Its subcellular location is the nucleus. Its function is as follows. Transcription factor required for differentiation of embryonic stem cells (ESCs) into primordial germ cells. In Mus musculus (Mouse), this protein is Homeobox protein Rhox5 (Rhox5).